The sequence spans 510 residues: UDP-galactopyranose mutase (510 aa).

Residues T18, D38, L46, and G61 each contribute to the FAD site. UDP-alpha-D-galactose is bound by residues G61 and G62. H63 is a binding site for FAD. NADH contacts are provided by H68, R91, and S93. Residues H68, R91, S93, and Y104 each coordinate NADPH. Residues Y104, Q107, M159, Y162, N163, W167, and R182 each coordinate UDP-alpha-D-galactose. Residue N203 participates in NADPH binding. UDP-alpha-D-galactose is bound at residue N207. Position 242 (V242) interacts with FAD. Residues W315 and Y317 each coordinate NADPH. Y317, R327, and Y419 together coordinate UDP-alpha-D-galactose. Residue R327 coordinates FAD. Residues Y419 and R447 each contribute to the NADH site. Positions 419 and 447 each coordinate NADPH. An FAD-binding site is contributed by R447. Y453 is a UDP-alpha-D-galactose binding site. Positions 456, 457, and 458 each coordinate FAD. Position 457 (N457) interacts with UDP-alpha-D-galactose. An NADH-binding site is contributed by N457. Position 457 (N457) interacts with NADPH. Residue H460 participates in NADPH binding. Residue S461 coordinates FAD.

This sequence belongs to the UDP-galactopyranose/dTDP-fucopyranose mutase family. As to quaternary structure, homotetramer. FAD serves as cofactor.

It carries out the reaction UDP-alpha-D-galactose = UDP-alpha-D-galactofuranose. Its function is as follows. UDP-galactopyranose mutase, key flavoenzyme of galactofuranose metabolism that catalyzes the 6-to-5 ring contraction of UDP-galactopyranose to UDP-galactofuranose, the donor used by various galacto-furanosyltransferases. Controls the biosynthesis of galactomannan and galactofuranose containing glycoconjugates. The flavin functions as nucleophile, forming a flavin-sugar adduct that facilitates galactose-ring opening and contraction. The binding of UDP-galactopyranose induces profound conformational changes in the enzyme and two loops on opposite sides of the active site move toward each other by over 10 Angstroms to cover the substrate and create a closed active site. The chain is UDP-galactopyranose mutase from Aspergillus fumigatus (Neosartorya fumigata).